A 383-amino-acid chain; its full sequence is Soluble hydrogenase 42 kDa subunit (383 aa).

An N6-(pyridoxal phosphate)lysine modification is found at Lys194.

This sequence belongs to the class-V pyridoxal-phosphate-dependent aminotransferase family. As to quaternary structure, heterodimer of a large and a small subunit. Pyridoxal 5'-phosphate is required as a cofactor.

It localises to the cytoplasm. Functionally, soluble hydrogenase catalyzes both production and consumption of hydrogen from suitable artificial electron donors or acceptors. This subunit catalyzes the tritium-exchange activity. This is Soluble hydrogenase 42 kDa subunit from Anabaena cylindrica.